The sequence spans 293 residues: Ribosomal protein L11 methyltransferase (293 aa).

The S-adenosyl-L-methionine site is built by Thr-145, Gly-166, Asp-188, and Asn-230.

It belongs to the methyltransferase superfamily. PrmA family.

It is found in the cytoplasm. The catalysed reaction is L-lysyl-[protein] + 3 S-adenosyl-L-methionine = N(6),N(6),N(6)-trimethyl-L-lysyl-[protein] + 3 S-adenosyl-L-homocysteine + 3 H(+). Methylates ribosomal protein L11. The sequence is that of Ribosomal protein L11 methyltransferase from Sodalis glossinidius (strain morsitans).